Reading from the N-terminus, the 190-residue chain is C-type lectin domain family 5 member A (190 aa).

Residues Met1 to His4 are Cytoplasmic-facing. A helical; Signal-anchor for type II membrane protein membrane pass occupies residues Met5–Leu25. The Extracellular segment spans residues Tyr26–Lys190. N-linked (GlcNAc...) asparagine glycosylation is found at Asn51, Asn146, and Asn153. One can recognise a C-type lectin domain in the interval His80–Glu186. 2 disulfides stabilise this stretch: Cys101–Cys185 and Cys163–Cys177.

Monomer. Homodimer. The majority of CLEC5A is expressed as a monomeric form on macrophages. Interacts with TYROBP/DAP12. The interaction with TYROBP is required for CLEC5 cell surface expression. Interacts with HCST/DAP10. Forms a CLEC5A/TYROBP/HCST trimolecular complex depending almost solely on TYROBP. In terms of processing, N-glycosylated. Contains sialic acid residues. In terms of tissue distribution, strong expression in bone marrow cells and thioglycollate-induced neutrophils (at protein level). Expressed on granulocytes and monocytes from bone marrow and peripheral blood. Expressed in macrophage cell line J-774, but not in T-cell lines, B-cell lines, or mast cell lines.

Its subcellular location is the cell membrane. In terms of biological role, functions as a positive regulator of osteoclastogenesis. Cell surface receptor that signals via TYROBP. Regulates inflammatory responses. The protein is C-type lectin domain family 5 member A (Clec5a) of Mus musculus (Mouse).